A 151-amino-acid chain; its full sequence is Large ribosomal subunit protein bL9 (151 aa).

The protein belongs to the bacterial ribosomal protein bL9 family.

Functionally, binds to the 23S rRNA. This chain is Large ribosomal subunit protein bL9, found in Nitrosomonas europaea (strain ATCC 19718 / CIP 103999 / KCTC 2705 / NBRC 14298).